Here is a 240-residue protein sequence, read N- to C-terminus: Orotidine 5'-phosphate decarboxylase (240 aa).

Substrate is bound by residues Asp-12, Lys-34, 62–71 (DMKLFDIGNT), Thr-117, Arg-180, Gln-189, Gly-209, and Arg-210. Catalysis depends on Lys-64, which acts as the Proton donor.

Belongs to the OMP decarboxylase family. Type 1 subfamily. Homodimer.

The enzyme catalyses orotidine 5'-phosphate + H(+) = UMP + CO2. The protein operates within pyrimidine metabolism; UMP biosynthesis via de novo pathway; UMP from orotate: step 2/2. Its function is as follows. Catalyzes the decarboxylation of orotidine 5'-monophosphate (OMP) to uridine 5'-monophosphate (UMP). The polypeptide is Orotidine 5'-phosphate decarboxylase (Ruegeria pomeroyi (strain ATCC 700808 / DSM 15171 / DSS-3) (Silicibacter pomeroyi)).